The sequence spans 428 residues: 3-phosphoshikimate 1-carboxyvinyltransferase (428 aa).

K19, S20, and R24 together coordinate 3-phosphoshikimate. Residue K19 coordinates phosphoenolpyruvate. Phosphoenolpyruvate-binding residues include G91 and R119. 3-phosphoshikimate is bound by residues S164, Q166, D312, and K339. Residue Q166 participates in phosphoenolpyruvate binding. Catalysis depends on D312, which acts as the Proton acceptor. R343 and R386 together coordinate phosphoenolpyruvate.

This sequence belongs to the EPSP synthase family. In terms of assembly, monomer.

The protein localises to the cytoplasm. It catalyses the reaction 3-phosphoshikimate + phosphoenolpyruvate = 5-O-(1-carboxyvinyl)-3-phosphoshikimate + phosphate. It participates in metabolic intermediate biosynthesis; chorismate biosynthesis; chorismate from D-erythrose 4-phosphate and phosphoenolpyruvate: step 6/7. Functionally, catalyzes the transfer of the enolpyruvyl moiety of phosphoenolpyruvate (PEP) to the 5-hydroxyl of shikimate-3-phosphate (S3P) to produce enolpyruvyl shikimate-3-phosphate and inorganic phosphate. This Bacillus licheniformis (strain ATCC 14580 / DSM 13 / JCM 2505 / CCUG 7422 / NBRC 12200 / NCIMB 9375 / NCTC 10341 / NRRL NRS-1264 / Gibson 46) protein is 3-phosphoshikimate 1-carboxyvinyltransferase.